The primary structure comprises 273 residues: Bis(5'-nucleosyl)-tetraphosphatase, symmetrical (273 aa).

This sequence belongs to the Ap4A hydrolase family.

It catalyses the reaction P(1),P(4)-bis(5'-adenosyl) tetraphosphate + H2O = 2 ADP + 2 H(+). Functionally, hydrolyzes diadenosine 5',5'''-P1,P4-tetraphosphate to yield ADP. This is Bis(5'-nucleosyl)-tetraphosphatase, symmetrical from Aromatoleum aromaticum (strain DSM 19018 / LMG 30748 / EbN1) (Azoarcus sp. (strain EbN1)).